Here is a 412-residue protein sequence, read N- to C-terminus: MGVLRLAVCISGVYAAFLLWAIAQERLSKPFPSVHPHPHQQPHSPSDPPPGDKFPSPLFLNFAQALASSLSALCYLSFKAWRDGWKGRGLGQLLGLKEVFGKSQTALNGDAKANKKESELNEKTKEVVEKAPKPPKKSLLALLVQVSVFQTIASPIGFLALRHISYPTMVLGKSCKLIPVLLLNVLLYRRKFSPHKYIVVALVTVGISMFMLFAETSKKKKGGSDSMWGLVLLLVNLLIDGLTNSTQDQIFSSYPSYTGQQMMFTMALTTQIILLPLLVLPLPTNPISLLAHLPPPFGSSVPTSTLSFSPPAALESISFLLSHPSALAPLFAYALLGGLGQLFIFETIQHFGSLTLVMVTVTRKLFTMLLSVVVFEHRLTKGQWLGVGVVFAGIGVEAGMKRKDVMKKAKKD.

The chain crosses the membrane as a helical span at residues 3 to 23 (VLRLAVCISGVYAAFLLWAIA). The interval 31 to 51 (FPSVHPHPHQQPHSPSDPPPG) is disordered. Helical transmembrane passes span 58-78 (LFLN…YLSF), 139-159 (LLAL…IGFL), 197-217 (YIVV…AETS), and 222-242 (GGSD…IDGL). N-linked (GlcNAc...) asparagine glycosylation occurs at N244. 4 helical membrane-spanning segments follow: residues 262 to 282 (MMFT…VLPL), 325 to 345 (SALA…LFIF), 355 to 375 (TLVM…VVVF), and 379 to 399 (LTKG…VEAG).

The protein belongs to the nucleotide-sugar transporter family. SLC35B subfamily.

The protein localises to the endoplasmic reticulum membrane. Its function is as follows. May be involved in specific transport of UDP-Gal from the cytosol to the Golgi lumen. Involved in the maintenance of optimal conditions for the folding of secretory pathway proteins in the endoplasmic reticulum. The sequence is that of UDP-galactose transporter homolog 1 (HUT1-A) from Cryptococcus neoformans var. neoformans serotype D (strain JEC21 / ATCC MYA-565) (Filobasidiella neoformans).